A 952-amino-acid polypeptide reads, in one-letter code: Protein translocase subunit SecA (952 aa).

ATP-binding positions include glutamine 135, glycine 153–threonine 157, and aspartate 575. Low complexity predominate over residues alanine 907–alanine 921. The tract at residues alanine 907–tyrosine 946 is disordered. Zn(2+) is bound by residues cysteine 938, cysteine 940, cysteine 949, and cysteine 950.

It belongs to the SecA family. Monomer and homodimer. Part of the essential Sec protein translocation apparatus which comprises SecA, SecYEG and auxiliary proteins SecDF. Other proteins may also be involved. Requires Zn(2+) as cofactor.

The protein resides in the cell membrane. It is found in the cytoplasm. The catalysed reaction is ATP + H2O + cellular proteinSide 1 = ADP + phosphate + cellular proteinSide 2.. Part of the Sec protein translocase complex. Interacts with the SecYEG preprotein conducting channel. Has a central role in coupling the hydrolysis of ATP to the transfer of proteins into and across the cell membrane, serving as an ATP-driven molecular motor driving the stepwise translocation of polypeptide chains across the membrane. This is Protein translocase subunit SecA from Dehalococcoides mccartyi (strain CBDB1).